Here is a 902-residue protein sequence, read N- to C-terminus: Respiratory burst oxidase homolog protein A (902 aa).

The Cytoplasmic segment spans residues 1–344 (MMNRSEMQKL…KYFLFDNWKR (344 aa)). Disordered regions lie at residues 63–87 (KSPNHRGAGSNYEDQSLLRQGRSGR) and 107–130 (ASSVSSSSARKPPRPQLAKLRRSK). Residues 74–87 (YEDQSLLRQGRSGR) show a composition bias toward polar residues. Residues 107–116 (ASSVSSSSAR) are compositionally biased toward low complexity. 2 EF-hand-like regions span residues 163–173 (TMTTNGLLHRS) and 198–209 (ENVSGDSININE). EF-hand domains follow at residues 221–256 (DFDSRLRTFFAMVDKDSDGRLNEAEVREIITLSASA) and 265–300 (QADEYAALIMEELDPYHYGYIMIENLEILLLQAPMQ). Positions 234, 236, 238, 240, and 245 each coordinate Ca(2+). S311 and S315 each carry phosphoserine. The helical transmembrane segment at 345 to 365 (VWVMALWIGAMAGLFTWKFME) threads the bilayer. Residues 366 to 380 (YRKRSAYEVMGVCVC) are Extracellular-facing. A helical transmembrane segment spans residues 381 to 401 (IAKGAAETLKLNMAMILLPVC). A Ferric oxidoreductase domain is found at 383-540 (KGAAETLKLN…LFVIVYSLLV (158 aa)). The Cytoplasmic segment spans residues 402 to 428 (RNTITWLRTKTKLSAIVPFDDSLNFHK). The chain crosses the membrane as a helical span at residues 429-449 (VIAIGISVGVGIHATSHLACD). At 450–484 (FPRLIAADEDQYEPMEKYFGPQTKRYLDFVQSVEG) the chain is on the extracellular side. The helical transmembrane segment at 485–505 (VTGIGMVVLMTIAFTLATTWF) threads the bilayer. Over 506 to 529 (RRNKLNLPGPLKKITGFNAFWYSH) the chain is Cytoplasmic. The helical transmembrane segment at 530–550 (HLFVIVYSLLVVHGFYVYLII) threads the bilayer. The Extracellular segment spans residues 551 to 709 (EPWYKKTTWM…PAQDYKKFEV (159 aa)). The FAD-binding FR-type domain occupies 575–703 (IRAFRSSVEA…DGPYGAPAQD (129 aa)). The helical transmembrane segment at 710–730 (VLLVGLGIGATPMISIVSDII) threads the bilayer. The Cytoplasmic portion of the chain corresponds to 731–902 (NNLKGVEEGS…TKFIFHKENF (172 aa)). The tract at residues 738 to 760 (EGSNRRQSPIHNMVTPPVSPSRK) is disordered.

Belongs to the RBOH (TC 5.B.1.3) family. As to quaternary structure, monomer and homodimer.

Its subcellular location is the membrane. In terms of biological role, calcium-dependent NADPH oxidase that generates superoxide. The chain is Respiratory burst oxidase homolog protein A (RBOHA) from Arabidopsis thaliana (Mouse-ear cress).